Consider the following 351-residue polypeptide: Glycerol-1-phosphate dehydrogenase [NAD(P)+] (351 aa).

NAD(+) is bound by residues 97–101 (GKVID) and 119–122 (TSPS). Position 124 (aspartate 124) interacts with substrate. Residue serine 128 coordinates NAD(+). A substrate-binding site is contributed by aspartate 171. Aspartate 171 and histidine 251 together coordinate Zn(2+). Residue histidine 255 coordinates substrate. Residue histidine 267 coordinates Zn(2+).

The protein belongs to the glycerol-1-phosphate dehydrogenase family. Homodimer. The cofactor is Zn(2+).

It is found in the cytoplasm. The enzyme catalyses sn-glycerol 1-phosphate + NAD(+) = dihydroxyacetone phosphate + NADH + H(+). It carries out the reaction sn-glycerol 1-phosphate + NADP(+) = dihydroxyacetone phosphate + NADPH + H(+). Its pathway is membrane lipid metabolism; glycerophospholipid metabolism. In terms of biological role, catalyzes the NAD(P)H-dependent reduction of dihydroxyacetonephosphate (DHAP or glycerone phosphate) to glycerol 1-phosphate (G1P). The G1P thus generated is used as the glycerophosphate backbone of phospholipids in the cellular membranes of Archaea. This Saccharolobus islandicus (strain L.S.2.15 / Lassen #1) (Sulfolobus islandicus) protein is Glycerol-1-phosphate dehydrogenase [NAD(P)+].